A 175-amino-acid chain; its full sequence is Large ribosomal subunit protein uL6 (175 aa).

The protein belongs to the universal ribosomal protein uL6 family. In terms of assembly, part of the 50S ribosomal subunit.

In terms of biological role, this protein binds to the 23S rRNA, and is important in its secondary structure. It is located near the subunit interface in the base of the L7/L12 stalk, and near the tRNA binding site of the peptidyltransferase center. In Xylella fastidiosa (strain M12), this protein is Large ribosomal subunit protein uL6.